We begin with the raw amino-acid sequence, 529 residues long: uncharacterized protein (529 aa).

Over residues 1–11 (MSSSKIKELRE) the composition is skewed to basic and acidic residues. Disordered regions lie at residues 1–222 (MSSS…IPYS), 237–256 (PFLE…EENV), 271–372 (AFLQ…TAAP), and 393–488 (GSGN…PSFT). The span at 27–40 (MQQNQPRPATTTPP) shows a compositional bias: polar residues. The segment covering 83–95 (TKGRAHPRSRRPP) has biased composition (basic residues). Polar residues predominate over residues 110 to 125 (NTGSTKAADTKSSVEA). Phosphoserine is present on S128. Residues 170–199 (TTKAVEATTSKASSAHTDTLATSASNSDRG) show a composition bias toward polar residues. A Phosphoserine modification is found at S217. Over residues 237 to 249 (PFLESKVLPQNNE) the composition is skewed to polar residues. Low complexity predominate over residues 321-334 (SSPLSFSASKSPAA). Over residues 336 to 362 (DSSTKTPTEQVNVVSKQAPTTSSTSVI) the composition is skewed to polar residues. Positions 409–426 (ERTKSLSKESPVEPEKPA) are enriched in basic and acidic residues. Polar residues predominate over residues 430–455 (ATSSSTPTTENKESWTNQGIKSSQQR). Residues 456 to 470 (SANASPATSPSNQAS) show a composition bias toward low complexity. The span at 471–488 (IHASFTKESSTHSSPSFT) shows a compositional bias: polar residues.

It is found in the cytoplasm. This is an uncharacterized protein from Schizosaccharomyces pombe (strain 972 / ATCC 24843) (Fission yeast).